A 401-amino-acid chain; its full sequence is MKLRALDISEANSYIKRILINDPILSNLKVKGEISNFKVHSSGNVYLSLKDETSKLNCVIFKSNFNRNLKLDNGVKIIANGYISVYERDGAYQLYINEIEIEGIGNLHIEFNRLKEKLNKEGLFDPKYKIPIPKMPNSIGVITSPTGAVIRDIINVIKRRYPKVNIKLYPVTVQGDKSAEEICEAIRFFNHMKNVDTLIVGRGGGSIEELWSFNDEMVAREVFNSQIPIISAVGHETDFTICDFVSDMRAPTPSAAAEIATPSLDDINYKLGNIKSRMSKSLTNQIELDQYRLETVFNKINNYLDSYTIKDKVIQLDKIYDKIIFGIENNLKLEDEKLVKIGALLHNLSPLATMDRGYSITQKNGKVINSIKGLKIKDSIDIVLKDGNLECMIDKIENKEG.

It belongs to the XseA family. As to quaternary structure, heterooligomer composed of large and small subunits.

The protein localises to the cytoplasm. It carries out the reaction Exonucleolytic cleavage in either 5'- to 3'- or 3'- to 5'-direction to yield nucleoside 5'-phosphates.. Bidirectionally degrades single-stranded DNA into large acid-insoluble oligonucleotides, which are then degraded further into small acid-soluble oligonucleotides. In Clostridioides difficile (strain 630) (Peptoclostridium difficile), this protein is Exodeoxyribonuclease 7 large subunit.